Reading from the N-terminus, the 353-residue chain is Photosystem II D2 protein (353 aa).

At threonine 2 the chain carries N-acetylthreonine. The residue at position 2 (threonine 2) is a Phosphothreonine. Residues 41 to 61 (CAYFAIGGWFTGTTFVTSWYT) form a helical membrane-spanning segment. Histidine 118 lines the chlorophyll a pocket. The chain crosses the membrane as a helical span at residues 125–141 (GFMLRQFELARSVQLRP). Pheophytin a is bound by residues glutamine 130 and asparagine 143. A helical transmembrane segment spans residues 153 to 166 (VFVSVFLIYPLGQS). Histidine 198 is a binding site for chlorophyll a. The chain crosses the membrane as a helical span at residues 208–228 (AALLCAIHGATVENTLFEDGD). A plastoquinone is bound by residues histidine 215 and phenylalanine 262. Position 215 (histidine 215) interacts with Fe cation. Histidine 269 is a binding site for Fe cation. A helical membrane pass occupies residues 279–295 (GLWMSALGVVGLALNLR).

This sequence belongs to the reaction center PufL/M/PsbA/D family. As to quaternary structure, PSII is composed of 1 copy each of membrane proteins PsbA, PsbB, PsbC, PsbD, PsbE, PsbF, PsbH, PsbI, PsbJ, PsbK, PsbL, PsbM, PsbT, PsbX, PsbY, PsbZ, Psb30/Ycf12, at least 3 peripheral proteins of the oxygen-evolving complex and a large number of cofactors. It forms dimeric complexes. The D1/D2 heterodimer binds P680, chlorophylls that are the primary electron donor of PSII, and subsequent electron acceptors. It shares a non-heme iron and each subunit binds pheophytin, quinone, additional chlorophylls, carotenoids and lipids. There is also a Cl(-1) ion associated with D1 and D2, which is required for oxygen evolution. The PSII complex binds additional chlorophylls, carotenoids and specific lipids. serves as cofactor.

Its subcellular location is the plastid. It localises to the chloroplast thylakoid membrane. It catalyses the reaction 2 a plastoquinone + 4 hnu + 2 H2O = 2 a plastoquinol + O2. Functionally, photosystem II (PSII) is a light-driven water:plastoquinone oxidoreductase that uses light energy to abstract electrons from H(2)O, generating O(2) and a proton gradient subsequently used for ATP formation. It consists of a core antenna complex that captures photons, and an electron transfer chain that converts photonic excitation into a charge separation. The D1/D2 (PsbA/PsbD) reaction center heterodimer binds P680, the primary electron donor of PSII as well as several subsequent electron acceptors. D2 is needed for assembly of a stable PSII complex. The chain is Photosystem II D2 protein from Carica papaya (Papaya).